We begin with the raw amino-acid sequence, 187 residues long: Ribosome-recycling factor (187 aa).

Belongs to the RRF family.

It is found in the cytoplasm. In terms of biological role, responsible for the release of ribosomes from messenger RNA at the termination of protein biosynthesis. May increase the efficiency of translation by recycling ribosomes from one round of translation to another. This chain is Ribosome-recycling factor, found in Roseobacter denitrificans (strain ATCC 33942 / OCh 114) (Erythrobacter sp. (strain OCh 114)).